A 330-amino-acid chain; its full sequence is MKKSFIHQQQEISFVKNTFTQYLIDKLEIVEVQGPILSQVGDGMQDNLSGIEHPVSVKVLNIPEAEFEVVHSLAKWKRHTLARFGFNEGEGLFVHMKALRPDEDSLDPTHSVYVDQWDWEKVIPDGRRNLDYLKETVEKIYKAIRLTELAVEARFDIESILPKRITFIHTEELVEKYPDLSPKERENAIAKEYGAVFLIGIGGELADGKPHDGRAPDYDDWTTPSENGFKGLNGDILVWNEQLGTAFELSSMGIRVDEDALKRQVVLTGDEGRLEFEWHKTLLRGFFPLTIGGGIGQSRLAMFLLRKKHIGEVQSSVWPKEVRDTFENIL.

The protein belongs to the class-II aminoacyl-tRNA synthetase family. AsnA subfamily.

Its subcellular location is the cytoplasm. The catalysed reaction is L-aspartate + NH4(+) + ATP = L-asparagine + AMP + diphosphate + H(+). The protein operates within amino-acid biosynthesis; L-asparagine biosynthesis; L-asparagine from L-aspartate (ammonia route): step 1/1. The polypeptide is Aspartate--ammonia ligase (Streptococcus agalactiae serotype III (strain NEM316)).